A 127-amino-acid polypeptide reads, in one-letter code: Small ribosomal subunit protein bS6 (127 aa).

Positions 99-127 (PLPAPRVVPGSEPAAAPQEQPAANSEAAS) are disordered. Residues 109–127 (SEPAAAPQEQPAANSEAAS) show a composition bias toward low complexity.

The protein belongs to the bacterial ribosomal protein bS6 family.

Its function is as follows. Binds together with bS18 to 16S ribosomal RNA. The polypeptide is Small ribosomal subunit protein bS6 (Parasynechococcus marenigrum (strain WH8102)).